Here is a 78-residue protein sequence, read N- to C-terminus: UPF0291 protein LBUL_1264 (78 aa).

The protein belongs to the UPF0291 family.

The protein resides in the cytoplasm. This chain is UPF0291 protein LBUL_1264, found in Lactobacillus delbrueckii subsp. bulgaricus (strain ATCC BAA-365 / Lb-18).